Here is a 186-residue protein sequence, read N- to C-terminus: Protein GrpE (186 aa).

The segment covering 1–15 has biased composition (polar residues); the sequence is MADEQQTLDQQTPEQ. A disordered region spans residues 1 to 20; it reads MADEQQTLDQQTPEQPTGAA.

Belongs to the GrpE family. In terms of assembly, homodimer.

It is found in the cytoplasm. Its function is as follows. Participates actively in the response to hyperosmotic and heat shock by preventing the aggregation of stress-denatured proteins, in association with DnaK and GrpE. It is the nucleotide exchange factor for DnaK and may function as a thermosensor. Unfolded proteins bind initially to DnaJ; upon interaction with the DnaJ-bound protein, DnaK hydrolyzes its bound ATP, resulting in the formation of a stable complex. GrpE releases ADP from DnaK; ATP binding to DnaK triggers the release of the substrate protein, thus completing the reaction cycle. Several rounds of ATP-dependent interactions between DnaJ, DnaK and GrpE are required for fully efficient folding. The sequence is that of Protein GrpE from Pseudomonas aeruginosa (strain UCBPP-PA14).